A 149-amino-acid chain; its full sequence is UPF0178 protein Psyc_0274 (149 aa).

Belongs to the UPF0178 family.

The chain is UPF0178 protein Psyc_0274 from Psychrobacter arcticus (strain DSM 17307 / VKM B-2377 / 273-4).